The following is a 133-amino-acid chain: Small ribosomal subunit protein uS11 (133 aa).

The disordered stretch occupies residues 1-23 (MPPKTRGAVRKPRKKDKKNIALG). Residues 7–17 (GAVRKPRKKDK) are compositionally biased toward basic residues.

The protein belongs to the universal ribosomal protein uS11 family. In terms of assembly, part of the 30S ribosomal subunit. Interacts with proteins S7 and S18. Binds to IF-3.

Functionally, located on the platform of the 30S subunit, it bridges several disparate RNA helices of the 16S rRNA. Forms part of the Shine-Dalgarno cleft in the 70S ribosome. The sequence is that of Small ribosomal subunit protein uS11 from Arthrobacter sp. (strain FB24).